Consider the following 164-residue polypeptide: Interferon gamma (164 aa).

The N-terminal stretch at 1–19 (MTCQTYNLFVLSVIMIYYG) is a signal peptide. Asn-42 and Asn-61 each carry an N-linked (GlcNAc...) asparagine glycan.

Belongs to the type II (or gamma) interferon family. As to quaternary structure, homodimer.

Its subcellular location is the secreted. Produced by lymphocytes activated by specific antigens or mitogens. IFN-gamma, in addition to having antiviral activity, has important immunoregulatory functions. It is a potent activator of macrophages, it has antiproliferative effects on transformed cells and it can potentiate the antiviral and antitumor effects of the type I interferons. This chain is Interferon gamma (IFNG), found in Gallus gallus (Chicken).